The primary structure comprises 145 residues: Large ribosomal subunit protein bL17 (145 aa).

The segment at 123-145 (KRVDRKKKDPAKDKTEEKKLATA) is disordered.

This sequence belongs to the bacterial ribosomal protein bL17 family. As to quaternary structure, part of the 50S ribosomal subunit. Contacts protein L32.

In Pelagibacter ubique (strain HTCC1062), this protein is Large ribosomal subunit protein bL17.